Here is a 2672-residue protein sequence, read N- to C-terminus: MTAILNWEDISPVLEKGTRESHVSKRVPFLQDISQLVRQETLEKPQLSEIAFVLLNTFTIYEDNRSKSLVTSILLDILNLEPCLLENFIRFISDVVISNPATKAVADYLNLLDWINSFLIFVSHNSNLFEEYIPKLLVAHSYATFGVETILDNQEEGKKSQDKQNQHRKRIRYCIFQTTVKAFLKCLKDNDDSISFMKISIKTVLESYSKLKITSVGVVMIMGALTQAALQLLSRQPALHSVLKENSAEKYCEYLGKEVFLGKNPPSSFCLEIGLKPFLKEFVSQELFIKFFIPNIEKAVLRSPEVGFSILSELYAGVSPEKVNLLNAFASSKLINQYFSSFKSSKEVVRSVSLQSMIILLRKISNTDTTLEDLTKLIDEIFKNIKSNLNADYKSLISKILIEIPLTHYEVSEKICKGLSPYIGKEGNEAALTLMLNAFFVHYFSLGKPIEDLDKIISAGFADKKPALKKCWFAAFLNNSNAASEEVILNFIDGCLEFVKDSIIHYQTHGHACILASIEFTNKILALDNTELNDRVMQLIETLPENSSIGDAILTAALSTELSIENRIHAVNLLQELFYKKPEFIGFSVIDAIERRMRVQELIPQQNTSFKYVTSVLLAITSELPDKEASIKVLINALVIAQWNIFNIKNGWAGLVLRARLDPAEVVKEHASVIMEKILEITGSCEWIDTIYGACGLQAAAYAAFIQPNEFTPILCKTIEADLTADDFSRLSEEDFEIFAGEEGVLVVDVLEESMNKKLSNKNSKEYETLMWEQKIRKEQAKKNVKKLSKEEQELVNEQLAKESAVRSHVSEISTRLKRGIRLVSELSKAACLVQNGIATWFPLAVTKLLYLCSEPNISKLTEDVNNVFLQLSQNVSERLGNIRLFLGLATLRVHNANGISQDYLQEPLVELLTRVLFRIKFVSNQAAIDSISLTYILPLLINVLEKGKAIALKNADKPVVKAEFVEEDEEEEHLLLAMEIISVHAEAFEDPSIPRISIVEVLLSLLSLPSKAKIAKDCFNALCQSISVAPNQEDLDMILSNLLSPNQFVRSTILETLDNEFELEPFMKYSPEVFICRFDSDPSNREIADFIWEFNKFVVNDELLKSLFPLFNQDDSGLRLFAANAYAFGAVSLFTSEENSSKDYLNDLLNFYKEKAKPLEPILDQFGLVLVSASEQKDPWQGRSTVAITLKIMAKAFSAEDDTVVNIIKFLVDDGGLVDREPIVRQEMKEAGVELITLHGSQNSKDLIPIFEEALSSSTDSALKENVIILYGTLARHLQQSDARIHTIIERLLSTLDTPSADIQQAVSACIAPLVFQFKQKVGDYLGILMEKLLNPTVASSMRKGAAWGIAGLVKGYGISALSEFDIIRNLIEAAEDKKEPKRRESVGFCFQYLSESLGKFFEPYVIEILPNILKNLGDAVPEVRDATARATKAIMAHTTGYGVKKLIPVAVSNLDEIAWRTKRGSVQLLGNMAYLDPTQLSASLSTIVPEIVGVLNDSHKEVRKAADESLKRFGEVIRNPEIQKLVPVLLQAIGDPTKYTEEALDSLIQTQFVHYIDGPSLALIIHIIHRGMHDRSANIKRKACKIVGNMAILVDTKDLIPYLQQLIDEVEIAMVDPVPNTRATAARALGALVERLGEEQFPDLIPRLLDTLSDESKSGDRLGSAQALAEVISGLGLTKLDEMLPTILAGVTNFRAYIREGFMPLLLFLPVCFGSQFAPYINQIIQPILSGLADNDENIRDTALKAGKLIVKNYATKAVDLLLPELERGMFDENDRIRLSSVQLTGELLFQVTGISSRNEFSEEDGDHNGEFSGKLVDVLGQDRRDRILAALFVCRNDTSGIVRATTVDIWKALVPNTPRAVKEILPTLTGMIVTHLASSSNVLRNIAAQTLGDLVRRVGGNALSQLLPSLEESLIETSNSDSRQGVCIALYELIESASTETISQFQSTIVNIIRTALIDESATVREAAALSFDVFQDVVGKTAVDEVLPYLLHMLESSDNSDFALLGLQEIMSKKSDVIFPILIPTLLAPPIDAFRASALGSLAEVAGSALYKRLSIIINALVDAIIGTSEDESTKGALELALDRVFLSVNDDEGLHPLLQQIMSLLKSDNIEKRIAVLERLPNFFDKTVLDFDVYIPNFVSHAILSLDDEDQRVVNGNFNALSTLLKKVDKPTLEKLVKPAKQSLALTGRQGQDVAAFKLPRGPNCVLPIFLHGLMYGSNDEREESALAIADVVSKTPAANLKPFVSVITGPLIRVVGERFSSDIKAAILFALNVLFIKIPMFLRPFIPQLQRTFVKSLSDATNETLRLRAAKALGALIEHQPRVDPLVIELVTGAKQATDEGVKTAMLKALLEVIMKAGSKLNENSKTNIVNLVEEEMLGSNDKLAVAYAKLIGSLSEILSNDEAHKILQDKVLNADLDGETGKFAILTLNSFLKDAPTHIFNTGLIDEFVSYILNAIRSPDVYFGENGTIAAGKLLLLEGEKRSPFVKKDAAEPFKIGDENINLLINELSKAVLQPASNSTDVRRLALVVIRTLARFKFDECIKQYFDVVGPSVFSCLRDPVIPIKLAAEKAYLALFKLVEEDDMHTFNEWFAKISDRGNSIETVTGTTIQLRSVGDYTKRVGKRLANVERERIAAGGDAETMFSDRFEDEREIWAVGGVELTTDI.

HEAT repeat units follow at residues 5–42 (LNWE…QETL), 79–117 (NLEP…WINS), 174–211 (CIFQ…YSKL), 227–267 (QAAL…NPPS), 329–366 (FASS…KISN), 372–410 (EDLT…THYE), 509–549 (HGHA…NSSI), 611–648 (KYVT…IFNI), 706–745 (IQPN…EEGV), 902–932 (QDYL…IDSI), and 933–970 (SLTY…EEDE). An HEAT 12; degenerate repeat occupies 975–994 (LLLAMEIISVHAEAFEDPSI). An HEAT 13; degenerate repeat occupies 995 to 1030 (PRISIVEVLLSLLSLPSKAKIAKDCFNALCQSISVA). 32 HEAT repeats span residues 1031–1067 (PNQE…LEPF), 1099–1138 (VVND…FTSE), 1185–1224 (STVA…REPI), 1243–1281 (QNSK…HLQQ), 1284–1321 (ARIH…QFKQ), 1363–1401 (LSEF…SLGK), 1405–1442 (PYVI…HTTG), 1444–1480 (GVKK…LDPT), 1484–1521 (ASLS…VIRN), 1523–1559 (EIQK…HYID), 1561–1598 (PSLA…LVDT), 1603–1640 (PYLQ…RLGE), 1641–1679 (EQFP…GLGL), 1681–1717 (KLDE…CFGS), 1721–1758 (PYIN…NYAT), 1760–1796 (AVDL…QVTG), 1825–1862 (DRRD…NTPR), 1863–1903 (AVKE…RVGG), 1905–1942 (ALSQ…SAST), 1947–1984 (QFQS…VVGK), 1985–2024 (TAVD…VIFP), 2026–2055 (LIPT…SALY), 2057–2095 (RLSI…SVND), 2097–2134 (EGLH…KTVL), 2138–2175 (VYIP…KVDK), 2206–2243 (RGPN…KTPA), 2250–2286 (VSVI…KIPM), 2290–2328 (PFIP…HQPR), 2347–2384 (GVKT…EEML), 2392–2429 (VAYA…ETGK), 2450–2487 (GLID…LEGE), and 2506–2546 (ENIN…FKFD). The segment at 1330-1641 (LMEKLLNPTV…GALVERLGEE (312 aa)) is EF3-like region. The tract at residues 2207 to 2356 (GPNCVLPIFL…GVKTAMLKAL (150 aa)) is RWDBD region.

This sequence belongs to the GCN1 family. In terms of assembly, interacts (via N- and C-terminus) with GCN2 (via N-terminal RWD domain); this interaction stimulates GCN2 kinase activity in a GCN20-dependent manner in response to amino acid starvation. Interacts (via C-terminus) with GCN20 (via N-terminus); this interaction stimulates GCN2 kinase activity in response to amino acid starvation. The GCN1-GCN20 complex interacts with GCN2 on translating ribosomes in amino acid-starved cells; GCN1 may bind near the ribosomal A-site and promotes the transfer of uncharged tRNAs from the A-site to the tRNA-binding domain in GCN2 for its subsequent kinase activation, and hence allowing GCN4 translational activation and derepression of amino acid biosynthetic genes. Interacts (via C-terminus) with YIH1 (via N-terminus); this interaction reduces the GCN1-GCN20 complex formation and prevents the interaction of GCN1 with GCN2 and GCN2 kinase activation in amino acid-starved cells. Interacts with GIR2; this interaction prevents the interaction of GCN1 with GCN2 and GCN2 kinase activation in amino acid-starved cells. Interacts (via middle region) with RPS10A and RPS10B; these interactions are direct and promote GCN2 kinase activation. Associates (via N-terminus) with ribosomes; this association is stimulated in a ATP- and GCN20-dependent manner and is necessary to activate GCN2 kinase activity.

Its subcellular location is the cytoplasm. Functionally, ribosome collision sensor that activates a translation quality control pathway when a ribosome has stalled during translation. Directly binds to the ribosome and acts as a sentinel for colliding ribosomes. GCN1 also acts as a positive activator of the integrated stress response (ISR) by mediating activation of GCN2 in response to low amino acid, carbon, or purine availability. Component of the GCN1-GCN20 complex that forms a complex with GCN2 on translating ribosomes: during this process, GCN1 acts as a chaperone to facilitate delivery of uncharged tRNAs that enter the A-site of ribosomes to the tRNA-binding domain of GCN2, and hence stimulating GCN2 kinase activity, leading to phosphorylation of eukaryotic translation initiation factor 2 (eIF-2-alpha/SUI2). eIF-2-alpha/SUI2 phosphorylation converts eIF-2-alpha/SUI2 into a global protein synthesis inhibitor, leading to a global attenuation of cap-dependent translation, and thus to a reduced overall utilization of amino acids, while concomitantly initiating the preferential translation of ISR-specific mRNAs, such as the transcriptional activator GCN4, and hence allowing GCN4-mediated reprogramming of amino acid biosynthetic gene expression to alleviate nutrient depletion. The protein is eIF-2-alpha kinase activator GCN1 of Saccharomyces cerevisiae (strain ATCC 204508 / S288c) (Baker's yeast).